Reading from the N-terminus, the 121-residue chain is NADPH-dependent 7-cyano-7-deazaguanine reductase (121 aa).

The active-site Thioimide intermediate is the Cys-36. The active-site Proton donor is the Asp-43. Substrate-binding positions include 58–60 (VEL) and 77–78 (YE).

This sequence belongs to the GTP cyclohydrolase I family. QueF type 1 subfamily.

Its subcellular location is the cytoplasm. The catalysed reaction is 7-aminomethyl-7-carbaguanine + 2 NADP(+) = 7-cyano-7-deazaguanine + 2 NADPH + 3 H(+). It functions in the pathway tRNA modification; tRNA-queuosine biosynthesis. Catalyzes the NADPH-dependent reduction of 7-cyano-7-deazaguanine (preQ0) to 7-aminomethyl-7-deazaguanine (preQ1). This Rhodopirellula baltica (strain DSM 10527 / NCIMB 13988 / SH1) protein is NADPH-dependent 7-cyano-7-deazaguanine reductase.